The sequence spans 149 residues: Large ribosomal subunit protein bL9 (149 aa).

This sequence belongs to the bacterial ribosomal protein bL9 family.

Functionally, binds to the 23S rRNA. This chain is Large ribosomal subunit protein bL9, found in Clostridioides difficile (strain 630) (Peptoclostridium difficile).